The following is a 548-amino-acid chain: MDLNAIIEKMETGDQDAALTALQTYNKEKSQCFSFTSGEEEDRERLGELVLSFLERDLQPSCQLACLETIRILSRDKKSLSPFATRHAMQILIRHAGLGQGEGVTPEIPDLEVIVEALKCLCNIVFNSEAAQEAAADLQLMVGLAERLKQCREPQWNHDVRFFDLRLTFLITALRVDVRAQLAHELRGVSLLSEALDATFGLCWPDMYEVARAGFDGCSELPPLGRQETERVMEILKILFNVTFDSNRRHVDEEEAATYRHLGAILRHCIMSSAEGEERTEEMHSHTVNLLGNLPLPCLDVLLMPKVQQGSIEYMGVNMDAVKVLVEFMEKRLDRGNKLKETLLPSLNLLTESARIHRETRKFLRNKVLPPLRDVKNRPEVGNALRNKLVRLMTHIDTDVKHCAAEFLFVLCKESVSRFIKYTGYGNAAGLLAARGLMRGGRDPGHYSEDEDSDTEEYREAKPHINPVTGRVEEEQPNPMEGMTDEQKEYEAMKLVNMFDKLSREQVIQPMKIGADGKMTSMEPHELHHLASQQFGESNNSDSDSDTN.

2 disordered regions span residues 443 to 484 (DPGH…EGMT) and 517 to 548 (GKMTSMEPHELHHLASQQFGESNNSDSDSDTN).

The protein belongs to the synembryn family.

Its subcellular location is the cytoplasm. The protein localises to the cell cortex. Functionally, chaperone that specifically binds and folds nascent G alpha proteins prior to G protein heterotrimer formation, promoting their stability and activity: folds GNAI1, GNAO1, GNA13 and GNAQ. Does not fold G(s) G-alpha proteins GNAS nor GNAL. Also acts as a guanine nucleotide exchange factor (GEF) for G alpha proteins by stimulating exchange of bound GDP for free GTP. The protein is Chaperone Ric-8A (ric8a) of Danio rerio (Zebrafish).